Reading from the N-terminus, the 212-residue chain is Ras-related protein Rab-2A (212 aa).

Alanine 2 carries the post-translational modification N-acetylalanine. Residues 2 to 19 (AYAYLFKYIIIGDTGVGK) are required for interaction with PRKCI. Residues glycine 16, valine 17, glycine 18, lysine 19, serine 20, cysteine 21, and threonine 38 each coordinate GTP. A Mg(2+)-binding site is contributed by serine 20. A Switch 1 motif is present at residues 37 to 42 (LTIGVE). Mg(2+) is bound by residues threonine 38 and aspartate 61. Residues 63–72 (AGQESFRSIT) carry the Switch 2 motif. Residues glycine 64, asparagine 119, lysine 120, aspartate 122, alanine 150, and lysine 151 each contribute to the GTP site. Positions 190-212 (QHAATNASHGSNQGGQQAGGGCC) are disordered. Over residues 201 to 212 (NQGGQQAGGGCC) the composition is skewed to gly residues. 2 S-geranylgeranyl cysteine lipidation sites follow: cysteine 211 and cysteine 212.

It belongs to the small GTPase superfamily. Rab family. Interacts with PRKCI. Interacts with TRIP11. Interacts (in GTP-bound form) with GARIN1B. Interacts (GTP-bound) with HOPS complex component VPS39; interaction contributes to obtaining a functional HOPS complex that promotes autophagosome-lysosome membrane fusion driven by STX17-SNAP29-VAMP8. Interacts with VPS41. The cofactor is Mg(2+). Post-translationally, prenylated. Prenylation is required for association with cellular membranes.

It localises to the endoplasmic reticulum-Golgi intermediate compartment membrane. The protein resides in the melanosome. Its subcellular location is the endoplasmic reticulum membrane. It is found in the golgi apparatus membrane. The protein localises to the cytoplasmic vesicle. It localises to the secretory vesicle. The protein resides in the acrosome. Its subcellular location is the autophagosome membrane. The catalysed reaction is GTP + H2O = GDP + phosphate + H(+). Regulated by guanine nucleotide exchange factors (GEFs) which promote the exchange of bound GDP for free GTP, GTPase activating proteins (GAPs) which increase the GTP hydrolysis activity, and GDP dissociation inhibitors (GDIs) which inhibit the dissociation of the nucleotide from the GTPase. The small GTPases Rab are key regulators of intracellular membrane trafficking, from the formation of transport vesicles to their fusion with membranes. Rabs cycle between active GTP-bound and inactive GDP-bound states. In their active state, drive transport of vesicular carriers from donor organelles to acceptor organelles to regulate the membrane traffic that maintains organelle identity and morphology. RAB2A regulates autophagy by promoting autophagosome-lysosome fusion via recruitment of the HOPS endosomal tethering complex; this process involves autophagosomal RAB2A and lysosomal RAB39A recruitment of HOPS subcomplexes VPS39-VPS11 and VPS41-VPS16-VPS18-VPS33A, respectively, which assemble into a functional complex to mediate membrane tethering and SNAREs-driven membrane fusion. Required for protein transport from the endoplasmic reticulum to the Golgi complex. Regulates the compacted morphology of the Golgi. Together with RAB2B, redundantly required for efficient autophagic flux. This chain is Ras-related protein Rab-2A, found in Mus musculus (Mouse).